A 568-amino-acid polypeptide reads, in one-letter code: Protein NDNF (568 aa).

A signal peptide spans 1–19 (MVLLHWCLLWLLFPLSSRT). 2 Fibronectin type-III domains span residues 261 to 331 (NSGK…VGTF) and 445 to 564 (PSLP…VVKT). N-linked (GlcNAc...) asparagine glycosylation is present at N322.

Binds heparin and chondroitin sulfate. Post-translationally, O-glycosylated; contains heparan sulfate and chondroitin sulfate. In terms of processing, N-glycosylated. As to expression, expressed in neurons along the gonadotropin-releasing hormone (GnRH) expressing neurons migratory route.

It localises to the secreted. In terms of biological role, secretory protein that plays a role in various cellular processes. Acts as a chemorepellent acting on gonadotropin-releasing hormone (GnRH) expressing neurons regulating their migration to the hypothalamus. Also promotes neuron migration, growth and survival as well as neurite outgrowth and is involved in the development of the olfactory system. May also act through the regulation of growth factors activity and downstream signaling. Also regulates extracellular matrix assembly and cell adhesiveness. Promotes endothelial cell survival, vessel formation and plays an important role in the process of revascularization through NOS3-dependent mechanisms. The sequence is that of Protein NDNF (NDNF) from Homo sapiens (Human).